The sequence spans 354 residues: Vanillate O-demethylase oxygenase subunit (354 aa).

One can recognise a Rieske domain in the interval 7 to 107; sequence WYVACTPDEI…VEERYGFIWV (101 aa). Residues C47, H49, C66, and H69 each coordinate [2Fe-2S] cluster.

Belongs to the bacterial ring-hydroxylating dioxygenase alpha subunit family. In terms of assembly, this demethylase system consists of two proteins: an oxygenase and an oxygenase reductase. Requires [2Fe-2S] cluster as cofactor. Fe cation is required as a cofactor.

It catalyses the reaction vanillate + NADH + O2 + H(+) = 3,4-dihydroxybenzoate + formaldehyde + NAD(+) + H2O. Its pathway is xenobiotic degradation; vanillyl-alcohol degradation. This Pseudomonas sp. (strain HR199 / DSM 7063) protein is Vanillate O-demethylase oxygenase subunit (vanA).